We begin with the raw amino-acid sequence, 443 residues long: Thymidine phosphorylase (443 aa).

The protein belongs to the thymidine/pyrimidine-nucleoside phosphorylase family. In terms of assembly, homodimer.

The enzyme catalyses thymidine + phosphate = 2-deoxy-alpha-D-ribose 1-phosphate + thymine. It participates in pyrimidine metabolism; dTMP biosynthesis via salvage pathway; dTMP from thymine: step 1/2. Functionally, the enzymes which catalyze the reversible phosphorolysis of pyrimidine nucleosides are involved in the degradation of these compounds and in their utilization as carbon and energy sources, or in the rescue of pyrimidine bases for nucleotide synthesis. In Shewanella sp. (strain MR-7), this protein is Thymidine phosphorylase.